The primary structure comprises 329 residues: Ribosomal RNA small subunit methyltransferase C (329 aa).

It belongs to the methyltransferase superfamily. RsmC family. In terms of assembly, monomer.

Its subcellular location is the cytoplasm. The catalysed reaction is guanosine(1207) in 16S rRNA + S-adenosyl-L-methionine = N(2)-methylguanosine(1207) in 16S rRNA + S-adenosyl-L-homocysteine + H(+). Specifically methylates the guanine in position 1207 of 16S rRNA in the 30S particle. The sequence is that of Ribosomal RNA small subunit methyltransferase C from Actinobacillus pleuropneumoniae serotype 3 (strain JL03).